Here is a 637-residue protein sequence, read N- to C-terminus: Glutamate--cysteine ligase catalytic subunit (637 aa).

Met1 is modified (N-acetylmethionine). Phosphoserine occurs at positions 5 and 8.

This sequence belongs to the glutamate--cysteine ligase type 3 family. As to quaternary structure, heterodimer of a catalytic heavy chain and a regulatory light chain. As to expression, most abundant in kidney. Also found in liver and testis.

The enzyme catalyses L-cysteine + L-glutamate + ATP = gamma-L-glutamyl-L-cysteine + ADP + phosphate + H(+). The catalysed reaction is (2S)-2-aminobutanoate + L-glutamate + ATP = gamma-L-glutamyl-(2S)-2-aminobutanoate + ADP + phosphate + H(+). It participates in sulfur metabolism; glutathione biosynthesis; glutathione from L-cysteine and L-glutamate: step 1/2. Its activity is regulated as follows. Feedback inhibition by glutathione. Its function is as follows. Catalyzes the ATP-dependent ligation of L-glutamate and L-cysteine and participates in the first and rate-limiting step in glutathione biosynthesis. The sequence is that of Glutamate--cysteine ligase catalytic subunit from Rattus norvegicus (Rat).